The sequence spans 341 residues: S-adenosylmethionine:tRNA ribosyltransferase-isomerase (341 aa).

The protein belongs to the QueA family. As to quaternary structure, monomer.

Its subcellular location is the cytoplasm. It catalyses the reaction 7-aminomethyl-7-carbaguanosine(34) in tRNA + S-adenosyl-L-methionine = epoxyqueuosine(34) in tRNA + adenine + L-methionine + 2 H(+). It participates in tRNA modification; tRNA-queuosine biosynthesis. In terms of biological role, transfers and isomerizes the ribose moiety from AdoMet to the 7-aminomethyl group of 7-deazaguanine (preQ1-tRNA) to give epoxyqueuosine (oQ-tRNA). This chain is S-adenosylmethionine:tRNA ribosyltransferase-isomerase, found in Clostridium botulinum (strain Alaska E43 / Type E3).